The primary structure comprises 523 residues: GMP synthase [glutamine-hydrolyzing] (523 aa).

One can recognise a Glutamine amidotransferase type-1 domain in the interval 9–198; the sequence is PVLVVDFGAQ…LTEIAGLEQN (190 aa). Residue Cys86 is the Nucleophile of the active site. Residues His172 and Glu174 contribute to the active site. The 199-residue stretch at 199 to 397 folds into the GMPS ATP-PPase domain; sequence WTAANIAEEL…LGLPEEIVGR (199 aa). ATP is bound at residue 227-233; sequence SGGVDSA.

Homodimer.

The enzyme catalyses XMP + L-glutamine + ATP + H2O = GMP + L-glutamate + AMP + diphosphate + 2 H(+). It functions in the pathway purine metabolism; GMP biosynthesis; GMP from XMP (L-Gln route): step 1/1. In terms of biological role, catalyzes the synthesis of GMP from XMP. This Corynebacterium glutamicum (strain R) protein is GMP synthase [glutamine-hydrolyzing].